A 460-amino-acid polypeptide reads, in one-letter code: G2/mitotic-specific cyclin-4 (460 aa).

This sequence belongs to the cyclin family. Cyclin AB subfamily.

Its function is as follows. Essential for the control of the cell cycle at the G2/M (mitosis) transition. Interacts with the CDC2 protein kinase to form MPF. G2/M cyclins accumulate steadily during G2 and are abruptly destroyed at mitosis. The sequence is that of G2/mitotic-specific cyclin-4 (CLB4) from Saccharomyces cerevisiae (strain ATCC 204508 / S288c) (Baker's yeast).